The sequence spans 89 residues: Elongation factor 1-beta (89 aa).

Belongs to the EF-1-beta/EF-1-delta family.

Functionally, promotes the exchange of GDP for GTP in EF-1-alpha/GDP, thus allowing the regeneration of EF-1-alpha/GTP that could then be used to form the ternary complex EF-1-alpha/GTP/AAtRNA. This chain is Elongation factor 1-beta, found in Methanococcus maripaludis (strain DSM 14266 / JCM 13030 / NBRC 101832 / S2 / LL).